Consider the following 310-residue polypeptide: Probable endonuclease 4 (310 aa).

The tract at residues 1 to 31 (MNNQQSRGALGTSGATPDLPDATPGLSRNPV) is disordered. Residues His94, His134, Glu173, Asp207, His210, His244, Asp257, His259, and Glu289 each coordinate Zn(2+).

It belongs to the AP endonuclease 2 family. Zn(2+) serves as cofactor.

The enzyme catalyses Endonucleolytic cleavage to 5'-phosphooligonucleotide end-products.. Endonuclease IV plays a role in DNA repair. It cleaves phosphodiester bonds at apurinic or apyrimidinic (AP) sites, generating a 3'-hydroxyl group and a 5'-terminal sugar phosphate. The sequence is that of Probable endonuclease 4 from Streptomyces avermitilis (strain ATCC 31267 / DSM 46492 / JCM 5070 / NBRC 14893 / NCIMB 12804 / NRRL 8165 / MA-4680).